Here is a 204-residue protein sequence, read N- to C-terminus: ATP phosphoribosyltransferase (204 aa).

The protein belongs to the ATP phosphoribosyltransferase family. Short subfamily. Heteromultimer composed of HisG and HisZ subunits.

Its subcellular location is the cytoplasm. The enzyme catalyses 1-(5-phospho-beta-D-ribosyl)-ATP + diphosphate = 5-phospho-alpha-D-ribose 1-diphosphate + ATP. Its pathway is amino-acid biosynthesis; L-histidine biosynthesis; L-histidine from 5-phospho-alpha-D-ribose 1-diphosphate: step 1/9. Catalyzes the condensation of ATP and 5-phosphoribose 1-diphosphate to form N'-(5'-phosphoribosyl)-ATP (PR-ATP). Has a crucial role in the pathway because the rate of histidine biosynthesis seems to be controlled primarily by regulation of HisG enzymatic activity. The chain is ATP phosphoribosyltransferase from Campylobacter concisus (strain 13826).